Consider the following 167-residue polypeptide: Putative defense protein Hdd11-like (167 aa).

The signal sequence occupies residues 1–18; that stretch reads MMFTYVVAVASVVALTSA. The region spanning 19 to 167 is the Reelin domain; the sequence is YPTGAPPSAC…ESAPVKVLSH (149 aa). Cys28 and Cys105 are disulfide-bonded.

It belongs to the insect defense protein family. As to expression, in larvae, high expression in the fat body and low expression in midgut, hemocytes and malpighian tubules. No expression in silkgland.

The protein localises to the secreted. In terms of biological role, may have antimicrobial activity. This is Putative defense protein Hdd11-like from Samia ricini (Indian eri silkmoth).